We begin with the raw amino-acid sequence, 225 residues long: NAD(P)H-quinone oxidoreductase subunit K, chloroplastic (225 aa).

Residues Cys43, Cys44, Cys108, and Cys139 each coordinate [4Fe-4S] cluster.

It belongs to the complex I 20 kDa subunit family. In terms of assembly, NDH is composed of at least 16 different subunits, 5 of which are encoded in the nucleus. The cofactor is [4Fe-4S] cluster.

The protein resides in the plastid. It is found in the chloroplast thylakoid membrane. It carries out the reaction a plastoquinone + NADH + (n+1) H(+)(in) = a plastoquinol + NAD(+) + n H(+)(out). The catalysed reaction is a plastoquinone + NADPH + (n+1) H(+)(in) = a plastoquinol + NADP(+) + n H(+)(out). In terms of biological role, NDH shuttles electrons from NAD(P)H:plastoquinone, via FMN and iron-sulfur (Fe-S) centers, to quinones in the photosynthetic chain and possibly in a chloroplast respiratory chain. The immediate electron acceptor for the enzyme in this species is believed to be plastoquinone. Couples the redox reaction to proton translocation, and thus conserves the redox energy in a proton gradient. This is NAD(P)H-quinone oxidoreductase subunit K, chloroplastic from Platanus occidentalis (Sycamore).